A 447-amino-acid chain; its full sequence is Tubulin beta-2 chain (447 aa).

8 residues coordinate GTP: Gln11, Glu69, Ser138, Gly142, Thr143, Gly144, Asn204, and Asn226. A Mg(2+)-binding site is contributed by Glu69. Positions 419 to 447 are disordered; it reads VSEYQQYQDATADDEGEYEDEEEEADLQD. The segment covering 429–447 has biased composition (acidic residues); sequence TADDEGEYEDEEEEADLQD.

This sequence belongs to the tubulin family. Dimer of alpha and beta chains. A typical microtubule is a hollow water-filled tube with an outer diameter of 25 nm and an inner diameter of 15 nM. Alpha-beta heterodimers associate head-to-tail to form protofilaments running lengthwise along the microtubule wall with the beta-tubulin subunit facing the microtubule plus end conferring a structural polarity. Microtubules usually have 13 protofilaments but different protofilament numbers can be found in some organisms and specialized cells. Requires Mg(2+) as cofactor. Expressed in leaf sheaths and suspension cultured cells.

The protein localises to the cytoplasm. The protein resides in the cytoskeleton. Functionally, tubulin is the major constituent of microtubules, a cylinder consisting of laterally associated linear protofilaments composed of alpha- and beta-tubulin heterodimers. Microtubules grow by the addition of GTP-tubulin dimers to the microtubule end, where a stabilizing cap forms. Below the cap, tubulin dimers are in GDP-bound state, owing to GTPase activity of alpha-tubulin. The polypeptide is Tubulin beta-2 chain (TUBB2) (Oryza sativa subsp. japonica (Rice)).